Consider the following 228-residue polypeptide: Cytidylate kinase (228 aa).

17–25 is an ATP binding site; the sequence is GPTASGKGT.

The protein belongs to the cytidylate kinase family. Type 1 subfamily.

Its subcellular location is the cytoplasm. It carries out the reaction CMP + ATP = CDP + ADP. The enzyme catalyses dCMP + ATP = dCDP + ADP. In Burkholderia vietnamiensis (strain G4 / LMG 22486) (Burkholderia cepacia (strain R1808)), this protein is Cytidylate kinase.